We begin with the raw amino-acid sequence, 340 residues long: Ferrochelatase (340 aa).

Fe cation-binding residues include His218 and Glu298.

It belongs to the ferrochelatase family.

It localises to the cytoplasm. It carries out the reaction heme b + 2 H(+) = protoporphyrin IX + Fe(2+). It functions in the pathway porphyrin-containing compound metabolism; protoheme biosynthesis; protoheme from protoporphyrin-IX: step 1/1. In terms of biological role, catalyzes the ferrous insertion into protoporphyrin IX. The chain is Ferrochelatase from Wolbachia sp. subsp. Brugia malayi (strain TRS).